A 331-amino-acid chain; its full sequence is Phosphoribosylformylglycinamidine cyclo-ligase (331 aa).

It belongs to the AIR synthase family.

It localises to the cytoplasm. It catalyses the reaction 2-formamido-N(1)-(5-O-phospho-beta-D-ribosyl)acetamidine + ATP = 5-amino-1-(5-phospho-beta-D-ribosyl)imidazole + ADP + phosphate + H(+). It functions in the pathway purine metabolism; IMP biosynthesis via de novo pathway; 5-amino-1-(5-phospho-D-ribosyl)imidazole from N(2)-formyl-N(1)-(5-phospho-D-ribosyl)glycinamide: step 2/2. The chain is Phosphoribosylformylglycinamidine cyclo-ligase from Clostridium botulinum (strain Loch Maree / Type A3).